A 175-amino-acid polypeptide reads, in one-letter code: Sec-independent protein translocase protein TatB (175 aa).

The helical transmembrane segment at 1-21 (MLDLGLSKMALIGVVALVVLG) threads the bilayer. Residues 99-115 (GDPAAADASGGLGATSD) show a composition bias toward low complexity. The segment at 99-118 (GDPAAADASGGLGATSDEPS) is disordered.

The protein belongs to the TatB family. As to quaternary structure, the Tat system comprises two distinct complexes: a TatABC complex, containing multiple copies of TatA, TatB and TatC subunits, and a separate TatA complex, containing only TatA subunits. Substrates initially bind to the TatABC complex, which probably triggers association of the separate TatA complex to form the active translocon.

The protein resides in the cell inner membrane. Its function is as follows. Part of the twin-arginine translocation (Tat) system that transports large folded proteins containing a characteristic twin-arginine motif in their signal peptide across membranes. Together with TatC, TatB is part of a receptor directly interacting with Tat signal peptides. TatB may form an oligomeric binding site that transiently accommodates folded Tat precursor proteins before their translocation. The polypeptide is Sec-independent protein translocase protein TatB (Burkholderia thailandensis (strain ATCC 700388 / DSM 13276 / CCUG 48851 / CIP 106301 / E264)).